A 176-amino-acid chain; its full sequence is Putative metal-dependent hydrolase BLi00869/BLi00870/BL03027 (176 aa).

Zn(2+) is bound by residues His-65, His-158, and His-162.

The protein belongs to the metal hydrolase YfiT family. In terms of assembly, homodimer. Zn(2+) is required as a cofactor.

The protein resides in the cytoplasm. Possible metal-dependent hydrolase. The polypeptide is Putative metal-dependent hydrolase BLi00869/BLi00870/BL03027 (Bacillus licheniformis (strain ATCC 14580 / DSM 13 / JCM 2505 / CCUG 7422 / NBRC 12200 / NCIMB 9375 / NCTC 10341 / NRRL NRS-1264 / Gibson 46)).